The sequence spans 208 residues: Small ribosomal subunit protein uS3 (208 aa).

The KH type-2 domain occupies 38-106; that stretch reads IRDYIKARLY…EILIDIQEVR (69 aa).

Belongs to the universal ribosomal protein uS3 family. In terms of assembly, part of the 30S ribosomal subunit. Forms a tight complex with proteins S10 and S14.

Its function is as follows. Binds the lower part of the 30S subunit head. Binds mRNA in the 70S ribosome, positioning it for translation. The sequence is that of Small ribosomal subunit protein uS3 from Syntrophobacter fumaroxidans (strain DSM 10017 / MPOB).